Consider the following 739-residue polypeptide: Vascular cell adhesion protein 1 (739 aa).

The N-terminal stretch at 1-24 (MPVKMVAIFGASTVLWILFAVSQA) is a signal peptide. Ig-like C2-type domains are found at residues 25–111 (FKIE…IQVD), 119–212 (PEIQ…KERE), 223–309 (PKNT…LIVQ), 312–397 (PFTV…KTIQ), 408–506 (EIEI…QTLY), 514–595 (PTIW…VELI), and 601–682 (KDIQ…RSLT). Residues 25–698 (FKIEISPEYK…ENNKDYFSPE (674 aa)) lie on the Extracellular side of the membrane. 5 disulfides stabilise this stretch: C47–C95, C52–C99, C137–C195, C246–C291, and C335–C383. N-linked (GlcNAc...) asparagine glycosylation occurs at N273. Residues N424, N531, N561, and N650 are each glycosylated (N-linked (GlcNAc...) asparagine). C534 and C579 are joined by a disulfide. Residues 699-720 (LLALYFASSLVIPAIGMIIYFA) traverse the membrane as a helical segment. Residues 721–739 (RKANMKGSYSLVEAQKSKV) are Cytoplasmic-facing.

As to quaternary structure, binds to ECMV-D capsid proteins and acts as a receptor for this virus. Post-translationally, cleaved by the metalloproteinase ADAM17 to generate the soluble form. In terms of processing, sialoglycoprotein. Ubiquitinated by TRIM65 via 'Lys-48'-linked ubiquitination; leading to proteasomal degradation. Expressed in aortic endothelial cells, with low expression in the descending thoracic aorta and the outer curvature of the aortic arch, where pulsatory shear stress exists, and high in the inner curvature of the aortic arch, where oscillatory shear stress prevails (at protein level). Expressed on inflamed vascular endothelium, as well as on macrophage-like and dendritic cell types in both normal and inflamed tissue.

Its subcellular location is the cell membrane. It localises to the secreted. Its function is as follows. Cell adhesion glycoprotein predominantly expressed on the surface of endothelial cells that plays an important role in immune surveillance and inflammation. Acts as a major regulator of leukocyte adhesion to the endothelium through interaction with different types of integrins. During inflammatory responses, binds ligands on the surface of activated endothelial cells to initiate the activation of calcium channels and the plasma membrane-associated small GTPase RAC1 leading to leukocyte transendothelial migration. Also serves as a quality-control checkpoint for entry into bone marrow by providing a 'don't-eat-me' stamping in the context of major histocompatibility complex (MHC) class-I presentation. This Rattus norvegicus (Rat) protein is Vascular cell adhesion protein 1 (Vcam1).